Here is a 1203-residue protein sequence, read N- to C-terminus: DNA-directed RNA polymerase subunit beta (1203 aa).

Positions 1174-1195 are enriched in basic and acidic residues; it reads AAQEAKAAFEAEEAEKATKAEA. Residues 1174 to 1203 are disordered; the sequence is AAQEAKAAFEAEEAEKATKAEATEEAAEQE.

It belongs to the RNA polymerase beta chain family. In terms of assembly, the RNAP catalytic core consists of 2 alpha, 1 beta, 1 beta' and 1 omega subunit. When a sigma factor is associated with the core the holoenzyme is formed, which can initiate transcription.

It catalyses the reaction RNA(n) + a ribonucleoside 5'-triphosphate = RNA(n+1) + diphosphate. Its function is as follows. DNA-dependent RNA polymerase catalyzes the transcription of DNA into RNA using the four ribonucleoside triphosphates as substrates. The protein is DNA-directed RNA polymerase subunit beta of Streptococcus pneumoniae (strain P1031).